Reading from the N-terminus, the 417-residue chain is D-amino acid dehydrogenase (417 aa).

Residue 3–17 (VIVLGSGVIGVTAAW) participates in FAD binding.

It belongs to the DadA oxidoreductase family. Requires FAD as cofactor.

The enzyme catalyses a D-alpha-amino acid + A + H2O = a 2-oxocarboxylate + AH2 + NH4(+). It participates in amino-acid degradation; D-alanine degradation; NH(3) and pyruvate from D-alanine: step 1/1. In terms of biological role, oxidative deamination of D-amino acids. The sequence is that of D-amino acid dehydrogenase from Methylobacillus flagellatus (strain ATCC 51484 / DSM 6875 / VKM B-1610 / KT).